Here is a 1170-residue protein sequence, read N- to C-terminus: Short transient receptor potential channel 2 (1170 aa).

Residues 1 to 627 (MLMSLTDSKE…GWRGSTTIWK (627 aa)) lie on the Cytoplasmic side of the membrane. Disordered regions lie at residues 64-113 (SLSD…QTST), 142-231 (AHKA…QATG), and 322-342 (ESGSDPSGAGPGGPLRNVEES). Polar residues predominate over residues 74 to 85 (SPGSSGLNQNSS). Positions 158–177 (GEPDSSHPERAEPRAEEPNR) are enriched in basic and acidic residues. ANK repeat units lie at residues 300–329 (KFPPTLLRAIQEGQLGLVQQLLESGSDPSG), 346–376 (SWREALNLAIRLGHEVITDVLLANVKFDFRQ), 377–405 (IHEALLVAVDTNQPAVVRRLLARLEREKG), and 429–458 (PGVTPLTLACQKDLYEIAQLLMDQGHTIAR). A helical membrane pass occupies residues 628-648 (LFVAFLIFLTMPFLCIGYWLA). Topologically, residues 649-658 (PKSRLGRLLK) are extracellular. The helical transmembrane segment at 659-679 (IPVLKFLLHSASYLWFLIFLL) threads the bilayer. Over 680–701 (GESLVMETQLSTFKGRSQSVWE) the chain is Cytoplasmic. Residues 702–722 (TSLHMIWVTGFLWFECKEVWI) traverse the membrane as a helical segment. The Extracellular portion of the chain corresponds to 723-737 (EGLRSYLLDWWNFLD). The chain crosses the membrane as a helical span at residues 738–758 (VVILSLYLASFALRLLLAGLA). Over 759–788 (YMHCRDASDSSTCRYFTTAERSEWRTEDPQ) the chain is Cytoplasmic. The chain crosses the membrane as a helical span at residues 789-809 (FLAEVLFAVTSMLSFTRLAYI). Over 810–832 (LPAHESLGTLQISIGKMIDDMIR) the chain is Extracellular. The chain crosses the membrane as a helical span at residues 833 to 853 (FMFILMIILTAFLCGLNNIYV). The Cytoplasmic segment spans residues 854–898 (PYQETEKLGNFNETFQFLFWTMFGMEEHSVVDMPQFLVPEFVGRA). Residues 899-919 (MYGIFTIVMVIVLLNMLIAMI) form a helical membrane-spanning segment. Topologically, residues 920-1170 (TNSFQKIEDD…GEDLETKGES (251 aa)) are extracellular. The stretch at 1030-1068 (RREFEETRRKDLGNRLTELTKTVSRLQSEVASVQKTVAA) forms a coiled coil. The tract at residues 1118-1170 (LEDSLDATGEAGTPASGESSSSSSAHVLVHREQEAEGAGDLPLGEDLETKGES) is disordered.

This sequence belongs to the transient receptor (TC 1.A.4) family. STrpC subfamily. TRPC2 sub-subfamily. As to expression, expressed exclusively in vomeronasal organ neurons (sensory microvilli).

The protein resides in the membrane. In terms of biological role, thought to form a receptor-activated calcium permeant cation channel. Probably is operated by a phosphatidylinositol second messenger system activated by receptor tyrosine kinases or G-protein coupled receptors. Is not activated by intracellular calcium store depletion. The chain is Short transient receptor potential channel 2 (Trpc2) from Rattus norvegicus (Rat).